Consider the following 349-residue polypeptide: Succinylglutamate desuccinylase (349 aa).

Residues His70, Glu73, and His166 each contribute to the Zn(2+) site. The active site involves Glu229.

Belongs to the AspA/AstE family. Succinylglutamate desuccinylase subfamily. Zn(2+) serves as cofactor.

The enzyme catalyses N-succinyl-L-glutamate + H2O = L-glutamate + succinate. The protein operates within amino-acid degradation; L-arginine degradation via AST pathway; L-glutamate and succinate from L-arginine: step 5/5. Functionally, transforms N(2)-succinylglutamate into succinate and glutamate. The chain is Succinylglutamate desuccinylase from Burkholderia pseudomallei (strain 1710b).